We begin with the raw amino-acid sequence, 105 residues long: Large ribosomal subunit protein P2 (105 aa).

It belongs to the eukaryotic ribosomal protein P1/P2 family. P1 and P2 exist as dimers at the large ribosomal subunit. In terms of processing, phosphorylated.

Its function is as follows. Plays an important role in the elongation step of protein synthesis. This is Large ribosomal subunit protein P2 (LIP2) from Leishmania braziliensis.